We begin with the raw amino-acid sequence, 423 residues long: T-box protein 2 (423 aa).

Positions 70 to 243 (LWQQFSQCGT…NNPFAKGFRD (174 aa)) form a DNA-binding region, T-box. Disordered regions lie at residues 238–324 (AKGF…PLRS) and 384–423 (VEATSEDSEEAEKPEVKKEQKSVTPPKKGGFDVLDLLSKP). Over residues 261–283 (DATQSPPGKTASLPTHSPHPSES) the composition is skewed to polar residues. A compositionally biased stretch (low complexity) spans 302 to 317 (TPTTSSLSTSTTPTLS). The segment covering 394-404 (AEKPEVKKEQK) has biased composition (basic and acidic residues).

Sumoylated. In terms of tissue distribution, expressed in body wall muscles and a subset of pharyngeal neurons. Expressed in head neurons and occassionally tail neurons. Not expressed in the pharynx.

The protein resides in the nucleus. Its function is as follows. Involved in the transcriptional regulation of genes required for the development of pharyngeal muscles derived from the ABa lineage. Acts as a transcriptional repressor and binds to T-box binding sites in its own promoter to negatively autoregulate its own expression in neurons, seam cells and the gut in order to restrict its expression to certain tissues. May function together with the nfya-1-NF-Y complex to repress its own expression. Plays a role in neural fate specification in the hermaphrodite-specific neuron (HSN)/PHB neuron lineage, acting in concert with homeobox protein egl-5 and the asymmetric cell division protein ham-1. This is T-box protein 2 from Caenorhabditis elegans.